The following is a 920-amino-acid chain: DNA ligase (920 aa).

NAD(+)-binding positions include 90–94 (DAAYD), 139–140 (SL), and Glu-173. The active-site N6-AMP-lysine intermediate is the Lys-175. Positions 196, 235, 360, and 384 each coordinate NAD(+). Zn(2+) contacts are provided by Cys-481, Cys-484, Cys-500, and Cys-506. Positions 662-691 (GEAAIESAETQGDTASETTGAPTGAEAPLG) are disordered. The span at 669 to 682 (AETQGDTASETTGA) shows a compositional bias: polar residues. The BRCT domain occupies 839-920 (SLPQTLAGKT…FAQLLATGTI (82 aa)).

It belongs to the NAD-dependent DNA ligase family. LigA subfamily. The cofactor is Mg(2+). Mn(2+) serves as cofactor.

It catalyses the reaction NAD(+) + (deoxyribonucleotide)n-3'-hydroxyl + 5'-phospho-(deoxyribonucleotide)m = (deoxyribonucleotide)n+m + AMP + beta-nicotinamide D-nucleotide.. DNA ligase that catalyzes the formation of phosphodiester linkages between 5'-phosphoryl and 3'-hydroxyl groups in double-stranded DNA using NAD as a coenzyme and as the energy source for the reaction. It is essential for DNA replication and repair of damaged DNA. This Bifidobacterium longum (strain DJO10A) protein is DNA ligase.